The following is a 165-amino-acid chain: Chaperone protein SicA (165 aa).

The protein belongs to the LcrH/SycD chaperone family. As to quaternary structure, dimer or higher-order oligomers.

The protein localises to the cytoplasm. In terms of biological role, type III secretion-associated chaperone required for SipB and SipC stabilization. Prevents premature association of SipB with SipC, which may lead to their targeting for degradation. Along with InvF, required for transcription activation of sigDE (sopB pipC), sicAsipBCDA, and sopE. The chain is Chaperone protein SicA (sicA) from Salmonella dublin.